The primary structure comprises 152 residues: 3-hydroxyacyl-[acyl-carrier-protein] dehydratase FabZ (152 aa).

Histidine 54 is a catalytic residue.

Belongs to the thioester dehydratase family. FabZ subfamily.

It is found in the cytoplasm. It carries out the reaction a (3R)-hydroxyacyl-[ACP] = a (2E)-enoyl-[ACP] + H2O. In terms of biological role, involved in unsaturated fatty acids biosynthesis. Catalyzes the dehydration of short chain beta-hydroxyacyl-ACPs and long chain saturated and unsaturated beta-hydroxyacyl-ACPs. In Shewanella woodyi (strain ATCC 51908 / MS32), this protein is 3-hydroxyacyl-[acyl-carrier-protein] dehydratase FabZ.